A 342-amino-acid polypeptide reads, in one-letter code: Zinc transporter ZIP11 (342 aa).

Helical transmembrane passes span 12–32 (LLGT…VFVF), 44–64 (LGFA…APAV), 72–92 (GFGA…AAFV), 194–214 (IALL…AVGV), 263–285 (FWYG…FAVV), 290–307 (ILPY…YVVM), and 322–342 (LASW…VGLG).

Belongs to the ZIP transporter (TC 2.A.5) family.

The protein localises to the cell membrane. It is found in the nucleus. It localises to the cytoplasm. The protein resides in the golgi apparatus. It catalyses the reaction Zn(2+)(in) = Zn(2+)(out). It carries out the reaction Cu(2+)(in) = Cu(2+)(out). Its function is as follows. Zinc importer that regulates cytosolic zinc concentrations either via zinc influx from the extracellular compartment or efflux from intracellular organelles such as Golgi apparatus. May transport copper ions as well. The transport mechanism remains to be elucidated. This chain is Zinc transporter ZIP11 (SLC39A11), found in Homo sapiens (Human).